The sequence spans 301 residues: Glycine--tRNA ligase alpha subunit (301 aa).

Belongs to the class-II aminoacyl-tRNA synthetase family. As to quaternary structure, tetramer of two alpha and two beta subunits.

Its subcellular location is the cytoplasm. The enzyme catalyses tRNA(Gly) + glycine + ATP = glycyl-tRNA(Gly) + AMP + diphosphate. The chain is Glycine--tRNA ligase alpha subunit from Variovorax paradoxus (strain S110).